Here is a 932-residue protein sequence, read N- to C-terminus: Ribosome biogenesis protein ERB1 (932 aa).

Residues 1-18 show a composition bias toward low complexity; it reads MVRPSSSSSASASAARSG. Residues 1–229 form a disordered region; sequence MVRPSSSSSA…RSQAAQAFDL (229 aa). Residues 27 to 36 show a composition bias toward polar residues; it reads PTATNPTTRA. 2 stretches are compositionally biased toward acidic residues: residues 57–119 and 150–172; these read VSDD…EVDS and DNSD…DEDE. Positions 175-184 are enriched in low complexity; the sequence is SAFAARSDAS. WD repeat units lie at residues 555-594 and 604-644; these read PDGG…CTAS and AERS…NYAK. The interval 679-698 is disordered; sequence SMPSKPDARSPVAWTRPSEA. WD repeat units follow at residues 762-800, 803-842, 846-885, and 901-932; these read SKGS…LIKT, SGFK…RPYK, YHAR…DYGE, and KNGL…LWTT.

It belongs to the WD repeat BOP1/ERB1 family. In terms of assembly, component of the NOP7 complex, composed of ERB1, NOP7 and YTM1. The complex is held together by ERB1, which interacts with NOP7 via its N-terminal domain and with YTM1 via a high-affinity interaction between the seven-bladed beta-propeller domains of the 2 proteins. The NOP7 complex associates with the 66S pre-ribosome.

The protein resides in the nucleus. It localises to the nucleolus. It is found in the nucleoplasm. Its function is as follows. Component of the NOP7 complex, which is required for maturation of the 25S and 5.8S ribosomal RNAs and formation of the 60S ribosome. This is Ribosome biogenesis protein ERB1 from Mycosarcoma maydis (Corn smut fungus).